The following is a 174-amino-acid chain: Nicotinamide-nucleotide adenylyltransferase (174 aa).

Belongs to the archaeal NMN adenylyltransferase family.

The protein resides in the cytoplasm. It carries out the reaction beta-nicotinamide D-ribonucleotide + ATP + H(+) = diphosphate + NAD(+). The protein operates within cofactor biosynthesis; NAD(+) biosynthesis; NAD(+) from nicotinamide D-ribonucleotide: step 1/1. This Archaeoglobus fulgidus (strain ATCC 49558 / DSM 4304 / JCM 9628 / NBRC 100126 / VC-16) protein is Nicotinamide-nucleotide adenylyltransferase.